Consider the following 131-residue polypeptide: Large ribosomal subunit protein uL22 (131 aa).

This sequence belongs to the universal ribosomal protein uL22 family. Part of the 50S ribosomal subunit.

In terms of biological role, this protein binds specifically to 23S rRNA; its binding is stimulated by other ribosomal proteins, e.g. L4, L17, and L20. It is important during the early stages of 50S assembly. It makes multiple contacts with different domains of the 23S rRNA in the assembled 50S subunit and ribosome. Functionally, the globular domain of the protein is located near the polypeptide exit tunnel on the outside of the subunit, while an extended beta-hairpin is found that lines the wall of the exit tunnel in the center of the 70S ribosome. The polypeptide is Large ribosomal subunit protein uL22 (Phytoplasma mali (strain AT)).